A 297-amino-acid polypeptide reads, in one-letter code: Probable endonuclease 4 (297 aa).

Zn(2+) is bound by residues histidine 69, histidine 110, glutamate 145, aspartate 179, histidine 182, histidine 214, aspartate 227, histidine 229, and glutamate 259.

This sequence belongs to the AP endonuclease 2 family. Zn(2+) serves as cofactor.

It catalyses the reaction Endonucleolytic cleavage to 5'-phosphooligonucleotide end-products.. In terms of biological role, endonuclease IV plays a role in DNA repair. It cleaves phosphodiester bonds at apurinic or apyrimidinic (AP) sites, generating a 3'-hydroxyl group and a 5'-terminal sugar phosphate. This Bacillus subtilis (strain 168) protein is Probable endonuclease 4.